A 116-amino-acid chain; its full sequence is Large ribosomal subunit protein uL18 (116 aa).

The protein belongs to the universal ribosomal protein uL18 family. In terms of assembly, part of the 50S ribosomal subunit; part of the 5S rRNA/L5/L18/L25 subcomplex. Contacts the 5S and 23S rRNAs.

This is one of the proteins that bind and probably mediate the attachment of the 5S RNA into the large ribosomal subunit, where it forms part of the central protuberance. This Novosphingobium aromaticivorans (strain ATCC 700278 / DSM 12444 / CCUG 56034 / CIP 105152 / NBRC 16084 / F199) protein is Large ribosomal subunit protein uL18.